A 945-amino-acid polypeptide reads, in one-letter code: Translation initiation factor IF-2 (945 aa).

Disordered regions lie at residues 52–80 (RSHG…DSSG) and 96–357 (MKRD…FQAP). Residues 153–175 (PEPEPIVEPEPEPEPEPEPEPQP) show a composition bias toward acidic residues. Composition is skewed to basic and acidic residues over residues 215-283 (DEER…KEAA) and 294-310 (AKTE…RTAR). In terms of domain architecture, tr-type G spans 445–614 (PRAPVVTVMG…LLQAEVLELT (170 aa)). The tract at residues 454–461 (GHVDHGKT) is G1. Position 454 to 461 (454 to 461 (GHVDHGKT)) interacts with GTP. The G2 stretch occupies residues 479 to 483 (GITQH). The segment at 500 to 503 (DTPG) is G3. GTP is bound by residues 500-504 (DTPGH) and 554-557 (NKID). A G4 region spans residues 554–557 (NKID). Residues 590–592 (SAK) are G5.

It belongs to the TRAFAC class translation factor GTPase superfamily. Classic translation factor GTPase family. IF-2 subfamily.

The protein resides in the cytoplasm. Its function is as follows. One of the essential components for the initiation of protein synthesis. Protects formylmethionyl-tRNA from spontaneous hydrolysis and promotes its binding to the 30S ribosomal subunits. Also involved in the hydrolysis of GTP during the formation of the 70S ribosomal complex. The chain is Translation initiation factor IF-2 from Aromatoleum aromaticum (strain DSM 19018 / LMG 30748 / EbN1) (Azoarcus sp. (strain EbN1)).